The primary structure comprises 711 residues: MKSLILAEKPSVARDIADALQINQKRNGYFENNQYIVTWALGHLVTNATPEQYDKNLKEWRLEDLPIIPKYMKTVVIGKTSKQFKTVKALILDNKVKDIIIATDAGREGELVARLILDKVGNKKPIRRLWISSVTKKAIQQGFKNLKDGRQYNDLYYAALARSEADWIVGINATRALTTKYDAQLSLGRVQTPTIQLVNTRQQEINQFKPQQYFTLSLTVKGFDFQLESNQRYTNKETLEQMVNNLKNVDGKIKSVATKHKKSYPQSLYNLTDLQQDMYRRYKIGPKETLNTLQSLYERHKVVTYPRTDSNYLTTDMVDTMKERIQATMATTYKDQARPLMSKTFSSKMSIFNNQKVSDHHAIIPTEVRPVMSDLSNRELKLYDMIVERFLEALMPPHEYDAITVTLEVAGHTFVLKENVTTVLGFKSIRQGESITEMQQPFSEGDEVKISKTNIREHETTPPEYFNEGSLLKAMENPQNFIQLKDKKYAQTLKQTGGIGTVATRADIIDKLFNMNAIESRDGKIKVTSKGKQILELAPEELTSPLLTAQWEEKLLLIERGKYQAKTFINEMKDFTKDVVNGIKNSDRKYKHDNLTTTECPTCGKFMIKVKTKNGQMLVCQDPSCKTKKNVQRKTNARCPNCKKKLTLFGKGKEAVYRCVCGHSETQAHMDQRMKSKSSGKVSRKEMKKYMNKNEGLDNNPFKDALKNLNL.

Residues 2 to 135 (KSLILAEKPS…IRRLWISSVT (134 aa)) enclose the Toprim domain. Mg(2+)-binding residues include Glu-8 and Asp-104. The 429-residue stretch at 152–580 (YNDLYYAALA…EMKDFTKDVV (429 aa)) folds into the Topo IA-type catalytic domain. An interaction with DNA region spans residues 186 to 191 (SLGRVQ). The O-(5'-phospho-DNA)-tyrosine intermediate role is filled by Tyr-305. The segment at 691–711 (MNKNEGLDNNPFKDALKNLNL) is disordered.

Belongs to the type IA topoisomerase family. The cofactor is Mg(2+).

The enzyme catalyses ATP-independent breakage of single-stranded DNA, followed by passage and rejoining.. Releases the supercoiling and torsional tension of DNA, which is introduced during the DNA replication and transcription, by transiently cleaving and rejoining one strand of the DNA duplex. Introduces a single-strand break via transesterification at a target site in duplex DNA. The scissile phosphodiester is attacked by the catalytic tyrosine of the enzyme, resulting in the formation of a DNA-(5'-phosphotyrosyl)-enzyme intermediate and the expulsion of a 3'-OH DNA strand. The free DNA strand then undergoes passage around the unbroken strand, thus removing DNA supercoils. Finally, in the religation step, the DNA 3'-OH attacks the covalent intermediate to expel the active-site tyrosine and restore the DNA phosphodiester backbone. The protein is DNA topoisomerase 3 of Staphylococcus aureus (strain Mu50 / ATCC 700699).